A 299-amino-acid polypeptide reads, in one-letter code: Probable adenylate kinase 7, mitochondrial (299 aa).

Residues 1–25 constitute a mitochondrion transit peptide; it reads MAGVLRLAGAARSPLARALAPAARR. Residue 80–85 participates in ATP binding; it reads GPQKHA. An NMP region spans residues 100-129; the sequence is SMGTLVRQELSPASSLYKKIANSVNEGKLV. Residues Arg-106, 127-129, 157-160, and Gln-164 each bind AMP; these read KLV and GIPR. Residues Arg-190 and 203–204 contribute to the ATP site; that span reads LF. Residues 193–237 form an LID region; it reads GGDICPHCGQLFDFSKTASSDRNPSLGSCTWPSQVQHAAVLGLED.

This sequence belongs to the adenylate kinase family.

The protein localises to the mitochondrion. The enzyme catalyses AMP + ATP = 2 ADP. Functionally, catalyzes the reversible transfer of the terminal phosphate group between ATP and AMP. Plays an important role in cellular energy homeostasis and in adenine nucleotide metabolism. The chain is Probable adenylate kinase 7, mitochondrial from Oryza sativa subsp. japonica (Rice).